The sequence spans 440 residues: MRLHFLPLVALCATTASSLAFDSSTSQPPGAQVYSVNDAAGLKRIGAHHPKYHDRRTVTIRSSHNDTDDVSADFLWGIRRANHGGRLLLKKGQKYVIGRKLDLSFLDNVEVQLDGELKFTDDVPYWQENNFYYDFQKSISFWRWGGHDVRIFGRGTLNGNGQRWYNEFAGQEILDPDNTYYRPILFVAENATRLSVEGITELNSPCWTNFLVNSKDISFDNVFINAYSTNASAEPKNTDGFDSLNVNGLSVTNTRVDIGDDCFSPKPNTTNIFVQNLWCNNTHGVSMGSIGQYPGVLDIIEHAYIENVTLLNGENGARLKAWAGEDVGYGRINNITYKNIHVENTDYPIVLDQCYFNIPADECASYPSQVNVTNIVFENVYGTSSGAEGNVVAELICSPNAICEDIKLKGINLTTPEGEKGVVVCDGISGGVGVECQSSE.

Residues 1 to 20 (MRLHFLPLVALCATTASSLA) form the signal peptide. 3 N-linked (GlcNAc...) asparagine glycosylation sites follow: N65, N190, and N230. The active-site Proton donor is D260. C262 and C279 form a disulfide bridge. N268 and N280 each carry an N-linked (GlcNAc...) asparagine glycan. Residue H283 is part of the active site. N-linked (GlcNAc...) asparagine glycans are attached at residues N307, N334, and N371. Cysteines 397 and 403 form a disulfide. A glycan (N-linked (GlcNAc...) asparagine) is linked at N412.

The protein belongs to the glycosyl hydrolase 28 family.

It localises to the secreted. It catalyses the reaction [(1-&gt;4)-alpha-D-galacturonosyl](n) + H2O = alpha-D-galacturonate + [(1-&gt;4)-alpha-D-galacturonosyl](n-1). Its function is as follows. Specific in hydrolyzing the terminal glycosidic bond of polygalacturonic acid and oligogalacturonates. This is Probable exopolygalacturonase B (pgxB) from Emericella nidulans (strain FGSC A4 / ATCC 38163 / CBS 112.46 / NRRL 194 / M139) (Aspergillus nidulans).